The sequence spans 1876 residues: Phenolphthiocerol/phthiocerol polyketide synthase subunit A (1876 aa).

The Carrier 1 domain maps to 9 to 83 (ADLRHWLIDY…ALAAYLAAPE (75 aa)). At S43 the chain carries O-(pantetheine 4'-phosphoryl)serine. In terms of domain architecture, Ketosynthase family 3 (KS3) spans 101–526 (DEPIAVVGMG…GTNAHVVIEQ (426 aa)). Catalysis depends on for beta-ketoacyl synthase activity residues C273, H408, and H448. The acyltransferase stretch occupies residues 626-950 (SPGPGTVFVY…NLNKAHTIHP (325 aa)). S720 (for malonyltransferase activity) is an active-site residue. The tract at residues 997 to 1112 (HTTVATVSAS…AQLSSSPSDS (116 aa)) is N-terminal hotdog fold. The 271-residue stretch at 997–1267 (HTTVATVSAS…YRALDFGLDV (271 aa)) folds into the PKS/mFAS DH domain. H1027 acts as the Proton acceptor; for dehydratase activity in catalysis. Positions 1102-1130 (TAQLSSSPSDSASSLNEHHRANGQPPERA) are disordered. A compositionally biased stretch (low complexity) spans 1106–1115 (SSSPSDSASS). The tract at residues 1130–1267 (AHRDLIPDLA…YRALDFGLDV (138 aa)) is C-terminal hotdog fold. D1186 (proton donor; for dehydratase activity) is an active-site residue. Position 1491–1551 (1491–1551 (AAYLITGGLG…RRRIDAIRAL (61 aa))) interacts with NADP(+). Residues 1491 to 1728 (AAYLITGGLG…DGYDVAQAVV (238 aa)) are beta-ketoacyl reductase. One can recognise a Carrier 2 domain in the interval 1759–1836 (EVRSELEQGL…SLASYLAKRV (78 aa)). S1796 is subject to O-(pantetheine 4'-phosphoryl)serine.

The cofactor is NADP(+). It depends on pantetheine 4'-phosphate as a cofactor.

The enzyme catalyses icosanoyl-[(phenol)carboxyphthiodiolenone synthase] + 2 (S)-methylmalonyl-CoA + 3 malonyl-CoA + 5 NADPH + 10 H(+) = C32-carboxyphthiodiolenone-[(phenol)carboxyphthiodiolenone synthase] + 5 CO2 + 5 NADP(+) + 5 CoA + 2 H2O. It catalyses the reaction docosanoyl-[(phenol)carboxyphthiodiolenone synthase] + 2 (S)-methylmalonyl-CoA + 3 malonyl-CoA + 5 NADPH + 10 H(+) = C34-carboxyphthiodiolenone-[(phenol)carboxyphthiodiolenone synthase] + 5 CO2 + 5 NADP(+) + 5 CoA + 2 H2O. The catalysed reaction is 17-(4-hydroxyphenyl)heptadecanoyl-[(phenol)carboxyphthiodiolenone synthase] + 2 (S)-methylmalonyl-CoA + 3 malonyl-CoA + 5 NADPH + 10 H(+) = C35-(phenol)carboxyphthiodiolenone-[(phenol)carboxyphthiodiolenone synthase] + 5 CO2 + 5 NADP(+) + 5 CoA + 2 H2O. It carries out the reaction 19-(4-hydroxyphenyl)nonadecanoyl-[(phenol)carboxyphthiodiolenone synthase] + 2 (S)-methylmalonyl-CoA + 3 malonyl-CoA + 5 NADPH + 10 H(+) = C37-(phenol)carboxyphthiodiolenone-[(phenol)carboxyphthiodiolenone synthase] + 5 CO2 + 5 NADP(+) + 5 CoA + 2 H2O. Its pathway is lipid metabolism; fatty acid biosynthesis. In terms of biological role, part of the PpsABCDE complex involved in the biosynthesis of the lipid core common to phthiocerols and phenolphthiocerols by successive additions of malonyl-CoA or methylmalonyl-CoA extender units. PpsA can accept as substrate the activated forms of either icosanoyl (C20), docosanoyl (C22) or lignoceroyl (C24) groups from FadD26, or a (4-hydroxyphenyl)-C17 or (4-hydroxyphenyl)-C19 fatty acyl from FadD29. PpsA initiates the biosynthesis and extends its substrate using a malonyl-CoA extender unit. The PpsB and PpsC proteins add the second and third malonyl-CoA extender units. PpsD adds an (R)-methylmalonyl unit and PpsE adds a second (R)-methylmalonyl unit. The incorporation of the methylmalonyl units results in formation of two branched methyl groups in the elongated product. The sequence is that of Phenolphthiocerol/phthiocerol polyketide synthase subunit A (ppsA) from Mycobacterium tuberculosis (strain CDC 1551 / Oshkosh).